The following is a 326-amino-acid chain: Phenylalanine--tRNA ligase alpha subunit (326 aa).

Residue glutamate 251 coordinates Mg(2+).

This sequence belongs to the class-II aminoacyl-tRNA synthetase family. Phe-tRNA synthetase alpha subunit type 1 subfamily. As to quaternary structure, tetramer of two alpha and two beta subunits. Requires Mg(2+) as cofactor.

It is found in the cytoplasm. It carries out the reaction tRNA(Phe) + L-phenylalanine + ATP = L-phenylalanyl-tRNA(Phe) + AMP + diphosphate + H(+). This Pseudoalteromonas atlantica (strain T6c / ATCC BAA-1087) protein is Phenylalanine--tRNA ligase alpha subunit.